We begin with the raw amino-acid sequence, 215 residues long: Adenylate kinase (215 aa).

Residue 10-15 (GAGKGT) coordinates ATP. Residues 30-59 (STGDMLRAAVKAGTELGLKAKSVMDAGGLV) are NMP. AMP contacts are provided by residues T31, R36, 57–59 (GLV), 85–88 (GFPR), and Q92. Positions 122 to 159 (GRRVHPASGRVYHTEYNPPKVAGKDDVSGEELVQREDD) are LID. Residues R123 and 132–133 (VY) each bind ATP. R156 and R167 together coordinate AMP. G201 contacts ATP.

This sequence belongs to the adenylate kinase family. As to quaternary structure, monomer.

The protein resides in the cytoplasm. The enzyme catalyses AMP + ATP = 2 ADP. It participates in purine metabolism; AMP biosynthesis via salvage pathway; AMP from ADP: step 1/1. In terms of biological role, catalyzes the reversible transfer of the terminal phosphate group between ATP and AMP. Plays an important role in cellular energy homeostasis and in adenine nucleotide metabolism. The polypeptide is Adenylate kinase (Ectopseudomonas mendocina (strain ymp) (Pseudomonas mendocina)).